We begin with the raw amino-acid sequence, 131 residues long: Profilin (131 aa).

Belongs to the profilin family. In terms of assembly, occurs in many kinds of cells as a complex with monomeric actin in a 1:1 ratio.

It is found in the cytoplasm. The protein resides in the cytoskeleton. Its function is as follows. Binds to actin and affects the structure of the cytoskeleton. At high concentrations, profilin prevents the polymerization of actin, whereas it enhances it at low concentrations. By binding to PIP2, it inhibits the formation of IP3 and DG. This Prunus persica (Peach) protein is Profilin.